We begin with the raw amino-acid sequence, 205 residues long: MSSRKKVLLKVIILGDSGVGKTSLMNQYVNKKFSASYKATIGADFLTREVLVDDRQVTMQLWDTAGQERFQSLGVAFYRGADCCVLVFDVNNSKSFDALDSWRDEFLIQASPRDPDNFPFVVLGNKIDVEESKRVISTKRAMTFCQSKGGIPYFETSAKEAINVEQAFEVIARNALAQEESEEFSGDFQDPINIHIDNDRDGCAC.

Residues 17-23 (SGVGKTS), 33-40 (FSASYKAT), G66, 125-128 (NKID), and 157-159 (SAK) contribute to the GTP site. The short motif at 37–45 (YKATIGADF) is the Effector region element. S-geranylgeranyl cysteine attachment occurs at residues C203 and C205. At C205 the chain carries Cysteine methyl ester.

This sequence belongs to the small GTPase superfamily. Rab family. As to quaternary structure, interacts with the Rab GDP dissociation inhibitor GDI1.

Its subcellular location is the vacuole. With respect to regulation, rab activation is generally mediated by a guanine exchange factor (GEF), while inactivation through hydrolysis of bound GTP is catalyzed by a GTPase activating protein (GAP). Its function is as follows. Ypt/Rab-type GTPases are key regulators of membrane trafficking and intracellular vesicular transport. They act as molecular switches that convert between GTP-bound and GDP-bound states, and regulate virtually all steps of membrane traffic from the formation of the transport vesicle at the donor membrane to its fusion at the target membrane. In the GDP-bound state, Ypt proteins are predominantly cytosolic, solubilized through the interaction with a GDP dissociation inhibitor (GDI). In the GTP-bound state, the proteins are membrane bound and interact with specific effector proteins that select cargo, promote vesicle movement, or verify the correct site of fusion. Required for fungal morphogenesis, vacuole fusion, autophagy, stress resistance and pathogenicity. In Pyricularia oryzae (strain 70-15 / ATCC MYA-4617 / FGSC 8958) (Rice blast fungus), this protein is Ypt/Rab-type GTPase ypt7.